A 516-amino-acid polypeptide reads, in one-letter code: Protein psiC (516 aa).

The first 19 residues, 1–19 (MKILILSFFLILGINLVFC), serve as a signal peptide directing secretion. Residues 109-249 (ESKDEPGIYV…YDACGVCLGK (141 aa)) form the PA14 domain. Asparagine 134, asparagine 234, asparagine 250, asparagine 284, asparagine 333, asparagine 357, and asparagine 367 each carry an N-linked (GlcNAc...) asparagine glycan. A compositionally biased stretch (low complexity) spans 418–427 (DIIIDSSSDI). A disordered region spans residues 418 to 465 (DIIIDSSSDIPIPTLSPSPQPSRFPTDTPTNTPMPPTRPPTPTEDPKI). Positions 449–460 (TPMPPTRPPTPT) are enriched in pro residues.

It belongs to the prespore-cell-inducing factor family.

It localises to the secreted. This Dictyostelium discoideum (Social amoeba) protein is Protein psiC (psiC).